A 338-amino-acid chain; its full sequence is Methionine import ATP-binding protein MetN 2 (338 aa).

In terms of domain architecture, ABC transporter spans 2 to 242 (IEIEKVCVDF…PQHAFTQQLV (241 aa)). 39–46 (GTSGAGKS) contacts ATP.

It belongs to the ABC transporter superfamily. Methionine importer (TC 3.A.1.24) family. In terms of assembly, the complex is composed of two ATP-binding proteins (MetN), two transmembrane proteins (MetI) and a solute-binding protein (MetQ).

Its subcellular location is the cell inner membrane. It carries out the reaction L-methionine(out) + ATP + H2O = L-methionine(in) + ADP + phosphate + H(+). The enzyme catalyses D-methionine(out) + ATP + H2O = D-methionine(in) + ADP + phosphate + H(+). Functionally, part of the ABC transporter complex MetNIQ involved in methionine import. Responsible for energy coupling to the transport system. In Salmonella paratyphi A (strain ATCC 9150 / SARB42), this protein is Methionine import ATP-binding protein MetN 2.